A 547-amino-acid polypeptide reads, in one-letter code: Type I inositol polyphosphate 5-phosphatase 4 (547 aa).

The span at 56–67 shows a compositional bias: basic and acidic residues; it reads CSVRKSKTETRS. A disordered region spans residues 56–80; that stretch reads CSVRKSKTETRSKRNSGRARRNKLD. Catalytic regions lie at residues 387 to 402 and 467 to 482; these read DRVIWLGDLNYRIALS and KRRTPAWCDRILWHGS.

Belongs to the inositol polyphosphate 5-phosphatase family.

In Arabidopsis thaliana (Mouse-ear cress), this protein is Type I inositol polyphosphate 5-phosphatase 4.